Consider the following 154-residue polypeptide: uncharacterized protein (154 aa).

This is an uncharacterized protein from Schizosaccharomyces pombe (strain 972 / ATCC 24843) (Fission yeast).